Reading from the N-terminus, the 422-residue chain is Serine--tRNA ligase (422 aa).

229–231 contributes to the L-serine binding site; the sequence is TAE. Residues 260 to 262 and Val-276 contribute to the ATP site; that span reads RRE. Glu-283 is a binding site for L-serine. Residue 349 to 352 participates in ATP binding; the sequence is EVTS. Residue Thr-384 participates in L-serine binding.

Belongs to the class-II aminoacyl-tRNA synthetase family. Type-1 seryl-tRNA synthetase subfamily. In terms of assembly, homodimer. The tRNA molecule binds across the dimer.

The protein localises to the cytoplasm. The catalysed reaction is tRNA(Ser) + L-serine + ATP = L-seryl-tRNA(Ser) + AMP + diphosphate + H(+). The enzyme catalyses tRNA(Sec) + L-serine + ATP = L-seryl-tRNA(Sec) + AMP + diphosphate + H(+). It functions in the pathway aminoacyl-tRNA biosynthesis; selenocysteinyl-tRNA(Sec) biosynthesis; L-seryl-tRNA(Sec) from L-serine and tRNA(Sec): step 1/1. Functionally, catalyzes the attachment of serine to tRNA(Ser). Is also able to aminoacylate tRNA(Sec) with serine, to form the misacylated tRNA L-seryl-tRNA(Sec), which will be further converted into selenocysteinyl-tRNA(Sec). The polypeptide is Serine--tRNA ligase (Treponema denticola (strain ATCC 35405 / DSM 14222 / CIP 103919 / JCM 8153 / KCTC 15104)).